Here is a 356-residue protein sequence, read N- to C-terminus: CLIP domain-containing serine protease C9 (356 aa).

The 46-residue stretch at 49–94 (SCDTPQVIGGKCMNISLCDPAFVHSIAYQEHTPVCQQNAFYRVICC) folds into the Clip domain. 4 disulfides stabilise this stretch: cysteine 50-cysteine 93, cysteine 60-cysteine 83, cysteine 66-cysteine 94, and cysteine 139-cysteine 155. N-linked (GlcNAc...) asparagine glycosylation is present at asparagine 62. In terms of domain architecture, Peptidase S1 spans 109-351 (IMHGIEAEPG…YFGWIKETVS (243 aa)). Active-site charge relay system residues include histidine 154 and aspartate 194. Cysteine 258 and cysteine 284 are joined by a disulfide. The N-linked (GlcNAc...) asparagine glycan is linked to asparagine 292. Cysteine 300 and cysteine 328 are disulfide-bonded. The active-site Charge relay system is serine 304.

It belongs to the peptidase S1 family. CLIP subfamily. In terms of assembly, in the active form, heterodimer of a p12 subunit and a p30 subunit; disulfide-linked. Secreted as a full-length protein. Following bacterium E.coli infection, proteolytically cleaved into two chains, p12 and p30, which remain covalently linked.

It is found in the secreted. Probable serine protease which plays an essential role in the innate immune response against bacteria and protozoa infection by activating the melanization cascade. In the susceptible strain G3, appears to be dispensable for ookinete elimination which occurs by lysis. The chain is CLIP domain-containing serine protease C9 from Anopheles gambiae (African malaria mosquito).